We begin with the raw amino-acid sequence, 778 residues long: Degenerin deg-1 (778 aa).

The Cytoplasmic portion of the chain corresponds to 1–82 (MSNHHSKTKK…IARNSFSKLM (82 aa)). Residues 83–103 (WGLIIFSFLLMFAYQASKLIF) traverse the membrane as a helical segment. At 104 to 711 (KFSAHEKITD…LVNLIADFGG (608 aa)) the chain is on the extracellular side. Residues 154–165 (NAKTHSKSEGEK) are compositionally biased toward basic and acidic residues. 2 disordered regions span residues 154-180 (NAKTHSKSEGEKKKPKVSRKQHSDASQ) and 201-220 (SNKTLQSQNKSGRRRSQRSI). 4 N-linked (GlcNAc...) asparagine glycosylation sites follow: asparagine 202, asparagine 209, asparagine 272, and asparagine 342. A compositionally biased stretch (low complexity) spans 346-369 (TSTTTTTTTTPPPTTTSTTTTTTT). The segment at 346-380 (TSTTTTTTTTPPPTTTSTTTTTTTTPPPTTTARPN) is disordered. Residues asparagine 473, asparagine 492, and asparagine 606 are each glycosylated (N-linked (GlcNAc...) asparagine). The chain crosses the membrane as a helical span at residues 712 to 732 (HLGLWLGFSVITVMEVCVLLV). Residues 733–778 (DMISLFFKSRHEEKLLRQSTKRKDVPEDKRQITVGSGRKSDAFVSI) lie on the Cytoplasmic side of the membrane.

Belongs to the amiloride-sensitive sodium channel (TC 1.A.6) family.

It localises to the membrane. Probable sodium channel subunit. Required by a subset of neurons. This Caenorhabditis elegans protein is Degenerin deg-1.